The primary structure comprises 674 residues: DNA ligase (674 aa).

Residues 31 to 35 (DYEYD), 80 to 81 (SL), and Glu110 each bind NAD(+). Lys112 acts as the N6-AMP-lysine intermediate in catalysis. Arg133, Glu167, Lys283, and Lys307 together coordinate NAD(+). Residues Cys401, Cys404, Cys419, and Cys424 each coordinate Zn(2+). One can recognise a BRCT domain in the interval 584-673 (KVEKIFEGMK…SKDEVKAVLE (90 aa)).

Belongs to the NAD-dependent DNA ligase family. LigA subfamily. It depends on Mg(2+) as a cofactor. Requires Mn(2+) as cofactor.

The catalysed reaction is NAD(+) + (deoxyribonucleotide)n-3'-hydroxyl + 5'-phospho-(deoxyribonucleotide)m = (deoxyribonucleotide)n+m + AMP + beta-nicotinamide D-nucleotide.. In terms of biological role, DNA ligase that catalyzes the formation of phosphodiester linkages between 5'-phosphoryl and 3'-hydroxyl groups in double-stranded DNA using NAD as a coenzyme and as the energy source for the reaction. It is essential for DNA replication and repair of damaged DNA. This chain is DNA ligase, found in Clostridioides difficile (strain 630) (Peptoclostridium difficile).